The following is a 198-amino-acid chain: Probable nicotinate-nucleotide adenylyltransferase (198 aa).

The protein belongs to the NadD family.

The catalysed reaction is nicotinate beta-D-ribonucleotide + ATP + H(+) = deamido-NAD(+) + diphosphate. It participates in cofactor biosynthesis; NAD(+) biosynthesis; deamido-NAD(+) from nicotinate D-ribonucleotide: step 1/1. In terms of biological role, catalyzes the reversible adenylation of nicotinate mononucleotide (NaMN) to nicotinic acid adenine dinucleotide (NaAD). This Albidiferax ferrireducens (strain ATCC BAA-621 / DSM 15236 / T118) (Rhodoferax ferrireducens) protein is Probable nicotinate-nucleotide adenylyltransferase.